A 653-amino-acid chain; its full sequence is Sulfate transporter 1.2 (653 aa).

The disordered stretch occupies residues 1–30 (MSSRAHPVDGSPATDGGHVPMKPSPTRHKV). Topologically, residues 1 to 91 (MSSRAHPVDG…GRNYTFKKFR (91 aa)) are cytoplasmic. A helical transmembrane segment spans residues 92 to 112 (GDLISGLTIASLCIPQDIGYA). Residues 113–116 (KLAN) are Extracellular-facing. Residues 117–137 (LDPKYGLYSSFVPPLVYACMG) traverse the membrane as a helical segment. Residues 138 to 141 (SSRD) lie on the Cytoplasmic side of the membrane. Residues 142–162 (IAIGPVAVVSLLLGTLLRAEI) traverse the membrane as a helical segment. Over 163–173 (DPNTSPDEYLR) the chain is Extracellular. 2 helical membrane passes run 174-194 (LAFT…FFRL) and 195-215 (GFLI…GAAI). Over 216–253 (TIALQQLKGFLGIKKFTKKTDIISVLESVFKAAHHGWN) the chain is Extracellular. Residues 254 to 274 (WQTILIGASFLTFLLTSKIIG) traverse the membrane as a helical segment. At 275–280 (KKSKKL) the chain is on the cytoplasmic side. A helical membrane pass occupies residues 281-301 (FWVPAIAPLISVIVSTFFVYI). The Extracellular portion of the chain corresponds to 302 to 339 (TRADKQGVQIVKHLDQGINPSSFHLIYFTGDNLAKGIR). A helical membrane pass occupies residues 340 to 360 (IGVVAGMVALTEAVAIGRTFA). At 361–372 (AMKDYQIDGNKE) the chain is on the cytoplasmic side. Residues 373-393 (MVALGMMNVVGSMSSCYVATG) form a helical membrane-spanning segment. Residues 394–409 (SFSRSAVNFMAGCQTA) are Extracellular-facing. Residues 410 to 430 (VSNIIMSIVVLLTLLFLTPLF) form a helical membrane-spanning segment. At 431–438 (KYTPNAIL) the chain is on the cytoplasmic side. Residues 439-459 (AAIIINAVIPLIDIQAAILIF) traverse the membrane as a helical segment. The Extracellular portion of the chain corresponds to 460-466 (KVDKLDF). A helical transmembrane segment spans residues 467–487 (IACIGAFFGVIFVSVEIGLLI). The Cytoplasmic portion of the chain corresponds to 488-653 (AVSISFAKIL…ACCPKLSNEV (166 aa)). The STAS domain occupies 522 to 645 (QYPEATMVPG…LTVADAVEAC (124 aa)).

This sequence belongs to the SLC26A/SulP transporter (TC 2.A.53.1) family. As to quaternary structure, homodimer. Interacts with OASA1 through its STAS domain. Expressed in lateral root cap, root hairs, epidermal and cortical cells of roots.

Its subcellular location is the cell membrane. With respect to regulation, interaction with OASA1 negatively impacts the transporter activity. Functionally, high-affinity H(+)/sulfate cotransporter that mediates the uptake of the environmental sulfate by plant roots. Plays a central role in the regulation of sulfate assimilation. Unable to transport molybdate. This chain is Sulfate transporter 1.2 (SULTR1;2), found in Arabidopsis thaliana (Mouse-ear cress).